Reading from the N-terminus, the 498-residue chain is ATP synthase subunit beta, chloroplastic (498 aa).

Position 172–179 (172–179 (GGAGVGKT)) interacts with ATP.

Belongs to the ATPase alpha/beta chains family. F-type ATPases have 2 components, CF(1) - the catalytic core - and CF(0) - the membrane proton channel. CF(1) has five subunits: alpha(3), beta(3), gamma(1), delta(1), epsilon(1). CF(0) has four main subunits: a(1), b(1), b'(1) and c(9-12).

It localises to the plastid. The protein localises to the chloroplast thylakoid membrane. It catalyses the reaction ATP + H2O + 4 H(+)(in) = ADP + phosphate + 5 H(+)(out). Produces ATP from ADP in the presence of a proton gradient across the membrane. The catalytic sites are hosted primarily by the beta subunits. The sequence is that of ATP synthase subunit beta, chloroplastic from Nicotiana sp. (Tobacco).